The primary structure comprises 315 residues: Diacylglycerol kinase (315 aa).

The region spanning 1–132 (MRKRARIIYN…VDIGKMNNRY (132 aa)) is the DAGKc domain. Residues 10–14 (NPTSG), Thr41, 67–73 (GDGTLNE), and Thr94 contribute to the ATP site. Mg(2+) contacts are provided by Lys213, Asp216, and Tyr218. Catalysis depends on Glu273, which acts as the Proton acceptor.

It belongs to the diacylglycerol/lipid kinase family. Homodimer. Mg(2+) is required as a cofactor.

The enzyme catalyses a 1,2-diacyl-sn-glycerol + ATP = a 1,2-diacyl-sn-glycero-3-phosphate + ADP + H(+). Functionally, catalyzes the phosphorylation of diacylglycerol (DAG) into phosphatidic acid. Is a key enzyme involved in the production of lipoteichoic acid by reintroducing DAG formed from the breakdown of membrane phospholipids into the phosphatidylglycerol biosynthetic pathway. This is Diacylglycerol kinase (dagK) from Staphylococcus aureus (strain MRSA252).